The chain runs to 104 residues: Large ribosomal subunit protein uL24 (104 aa).

This sequence belongs to the universal ribosomal protein uL24 family. In terms of assembly, part of the 50S ribosomal subunit.

Functionally, one of two assembly initiator proteins, it binds directly to the 5'-end of the 23S rRNA, where it nucleates assembly of the 50S subunit. Its function is as follows. One of the proteins that surrounds the polypeptide exit tunnel on the outside of the subunit. This Hydrogenovibrio crunogenus (strain DSM 25203 / XCL-2) (Thiomicrospira crunogena) protein is Large ribosomal subunit protein uL24.